We begin with the raw amino-acid sequence, 428 residues long: Dihydroorotase (428 aa).

Zn(2+)-binding residues include H59 and H61. Substrate-binding positions include 61–63 (HFR) and N93. Zn(2+)-binding residues include D151, H178, and H231. Position 277 (N277) interacts with substrate. D304 provides a ligand contact to Zn(2+). D304 is an active-site residue. Substrate is bound by residues H308 and 322–323 (FG).

The protein belongs to the metallo-dependent hydrolases superfamily. DHOase family. Class I DHOase subfamily. Requires Zn(2+) as cofactor.

The catalysed reaction is (S)-dihydroorotate + H2O = N-carbamoyl-L-aspartate + H(+). Its pathway is pyrimidine metabolism; UMP biosynthesis via de novo pathway; (S)-dihydroorotate from bicarbonate: step 3/3. Its function is as follows. Catalyzes the reversible cyclization of carbamoyl aspartate to dihydroorotate. This chain is Dihydroorotase, found in Bacillus licheniformis (strain ATCC 14580 / DSM 13 / JCM 2505 / CCUG 7422 / NBRC 12200 / NCIMB 9375 / NCTC 10341 / NRRL NRS-1264 / Gibson 46).